Consider the following 271-residue polypeptide: Nuclear egress protein 2 (271 aa).

At 1-249 the chain is on the perinuclear space side; sequence MSVVGKRVVD…LGRAVALVRR (249 aa). A helical membrane pass occupies residues 250-267; that stretch reads SWPWISAGIAFLCLGLVW. Residues 268–271 are Nuclear-facing; it reads MRPS.

It belongs to the herpesviridae NEC2 protein family. As to quaternary structure, forms a heterohexameric complex with NEC1. Post-translationally, phosphorylated.

Its subcellular location is the host nucleus inner membrane. In terms of biological role, plays an essential role in virion nuclear egress, the first step of virion release from infected cell. Within the host nucleus, NEC1 interacts with the newly formed capsid through the vertexes and directs it to the inner nuclear membrane by associating with NEC2. Induces the budding of the capsid at the inner nuclear membrane as well as its envelopment into the perinuclear space. There, the NEC1/NEC2 complex promotes the fusion of the enveloped capsid with the outer nuclear membrane and the subsequent release of the viral capsid into the cytoplasm where it will reach the secondary budding sites in the host Golgi or trans-Golgi network. In Homo sapiens (Human), this protein is Nuclear egress protein 2.